The sequence spans 1432 residues: uncharacterized protein (1432 aa).

Disordered regions lie at residues 1 to 72, 208 to 237, 280 to 335, 531 to 607, 690 to 712, 738 to 801, 896 to 950, 1044 to 1076, and 1303 to 1359; these read MDTI…NYYN, NKIE…NNGQ, ERNE…ENNL, IVKS…NNSS, QNKS…TTTT, NNTL…NGGR, QSNN…SPPT, NINS…NNNN, and NNNN…NTTP. Composition is skewed to low complexity over residues 14-72, 208-225, and 284-300; these read INNN…NYYN, NKIE…NNEN, and LTSP…LPSS. Residues 315 to 325 show a composition bias toward acidic residues; that stretch reads QEEEEEEEEED. 5 stretches are compositionally biased toward low complexity: residues 536-575, 583-607, 691-712, 744-779, and 896-944; these read SSSN…NKNK, DNNT…NNSS, NKSP…TTTT, NMNN…NSNN, and QSNN…SSSN. A compositionally biased stretch (gly residues) spans 1311–1320; that stretch reads NGNGNGGING. The segment covering 1321-1333 has biased composition (low complexity); it reads NNGNNSGSNNKEN. Gly residues predominate over residues 1334–1346; that stretch reads GGTGAGIGGGGGL. Positions 1347–1359 are enriched in low complexity; sequence QLPNNNNNNNTTP.

This is an uncharacterized protein from Dictyostelium discoideum (Social amoeba).